Reading from the N-terminus, the 393-residue chain is Chorismate synthase (393 aa).

NADP(+)-binding residues include Arg48 and Arg54. Residues 125-127, 238-239, Gly278, 293-297, and Arg319 each bind FMN; these read RSS, NA, and KPTSS. A disordered region spans residues 355-393; that stretch reads ACTTPKIPGHTGPREGQEEGPSDSEPKVEFADDPEPDEA.

This sequence belongs to the chorismate synthase family. In terms of assembly, homotetramer. FMNH2 serves as cofactor.

The enzyme catalyses 5-O-(1-carboxyvinyl)-3-phosphoshikimate = chorismate + phosphate. It functions in the pathway metabolic intermediate biosynthesis; chorismate biosynthesis; chorismate from D-erythrose 4-phosphate and phosphoenolpyruvate: step 7/7. Catalyzes the anti-1,4-elimination of the C-3 phosphate and the C-6 proR hydrogen from 5-enolpyruvylshikimate-3-phosphate (EPSP) to yield chorismate, which is the branch point compound that serves as the starting substrate for the three terminal pathways of aromatic amino acid biosynthesis. This reaction introduces a second double bond into the aromatic ring system. The sequence is that of Chorismate synthase from Nitrosospira multiformis (strain ATCC 25196 / NCIMB 11849 / C 71).